The primary structure comprises 879 residues: Phosphoenolpyruvate carboxylase (879 aa).

Active-site residues include His138 and Lys546.

The protein belongs to the PEPCase type 1 family. Mg(2+) serves as cofactor.

The catalysed reaction is oxaloacetate + phosphate = phosphoenolpyruvate + hydrogencarbonate. Its function is as follows. Forms oxaloacetate, a four-carbon dicarboxylic acid source for the tricarboxylic acid cycle. The protein is Phosphoenolpyruvate carboxylase of Pectobacterium atrosepticum (strain SCRI 1043 / ATCC BAA-672) (Erwinia carotovora subsp. atroseptica).